A 69-amino-acid polypeptide reads, in one-letter code: Sec-independent protein translocase protein TatA (69 aa).

The chain crosses the membrane as a helical span at residues 1 to 21 (MFGLGTMEMVIILVIVLVIFG). The segment at 44–69 (NAEDDAPAEPEVSKPAAAESTEKKDA) is disordered.

It belongs to the TatA/E family. In terms of assembly, the Tat system comprises two distinct complexes: a TatABC complex, containing multiple copies of TatA, TatB and TatC subunits, and a separate TatA complex, containing only TatA subunits. Substrates initially bind to the TatABC complex, which probably triggers association of the separate TatA complex to form the active translocon.

It localises to the cell inner membrane. In terms of biological role, part of the twin-arginine translocation (Tat) system that transports large folded proteins containing a characteristic twin-arginine motif in their signal peptide across membranes. TatA could form the protein-conducting channel of the Tat system. The sequence is that of Sec-independent protein translocase protein TatA from Magnetococcus marinus (strain ATCC BAA-1437 / JCM 17883 / MC-1).